A 93-amino-acid chain; its full sequence is Microcin N immunity protein (93 aa).

Helical transmembrane passes span 3–23 (FLNF…FIVW), 36–56 (LSII…NYKI), and 68–88 (LFCF…YFIL).

It belongs to the MceB microcin immunity protein family.

It localises to the cell inner membrane. In terms of biological role, probably able to protect the producing cell against microcin N (microcin 24). This chain is Microcin N immunity protein, found in Escherichia coli.